The following is a 107-amino-acid chain: Guanine nucleotide-binding protein G(I)/G(S)/G(O) subunit gamma-14 (107 aa).

The region spanning 69 to 107 is the G protein gamma domain; the sequence is KMAADLLKFCTEQAKNDPFLVGIPAATNSFKEKKPYAIL.

This sequence belongs to the G protein gamma family. G proteins are composed of 3 units; alpha, beta and gamma.

Its subcellular location is the cell membrane. Its function is as follows. Guanine nucleotide-binding proteins (G proteins) are involved as a modulator or transducer in various transmembrane signaling systems. The beta and gamma chains are required for the GTPase activity, for replacement of GDP by GTP, and for G protein-effector interaction. This chain is Guanine nucleotide-binding protein G(I)/G(S)/G(O) subunit gamma-14, found in Homo sapiens (Human).